A 156-amino-acid chain; its full sequence is Small ribosomal subunit protein uS7 (156 aa).

The protein belongs to the universal ribosomal protein uS7 family. Part of the 30S ribosomal subunit. Contacts proteins S9 and S11.

One of the primary rRNA binding proteins, it binds directly to 16S rRNA where it nucleates assembly of the head domain of the 30S subunit. Is located at the subunit interface close to the decoding center, probably blocks exit of the E-site tRNA. This Teredinibacter turnerae (strain ATCC 39867 / T7901) protein is Small ribosomal subunit protein uS7.